Consider the following 473-residue polypeptide: Monocarboxylate transporter 4 (473 aa).

Residues 1-17 (MGAVVVDDGPSGVKAPD) are Cytoplasmic-facing. A helical membrane pass occupies residues 18–38 (GGWGWAVLFGCFIITGFSYAF). Residues 39 to 61 (PKAVSVFFKELIREFGVGYSDTA) are Extracellular-facing. Residues 62-82 (WISSILLAMLYGTGPLCSVCV) traverse the membrane as a helical segment. Residues 83 to 91 (NRFGCRPVM) lie on the Cytoplasmic side of the membrane. A helical membrane pass occupies residues 92 to 112 (LVGGLFASMGMVIASFCTSIV). The Extracellular portion of the chain corresponds to 113 to 115 (QIY). The helical transmembrane segment at 116-136 (LTAGVITGLGLALNFQPSLIM) threads the bilayer. Topologically, residues 137 to 149 (LNRYFDKRRPLAN) are cytoplasmic. A helical membrane pass occupies residues 150–170 (GLSAAGSPVFLCALSPLGQIL). Topologically, residues 171–179 (QHEYGWRGG) are extracellular. The helical transmembrane segment at 180 to 200 (FLILGGMLLNCCVCGALMRPL) threads the bilayer. Over 201-231 (EPPKKSEATKEPAEKKAKKKLLDFSVFKDGG) the chain is Cytoplasmic. Residues 232–252 (FVIYTLAASIMVLGLFVPPVF) form a helical membrane-spanning segment. Topologically, residues 253–268 (VVSYAKDLGYQDTKAA) are extracellular. Residues 269–289 (FLLTILGFIDIFARPICGMVA) form a helical membrane-spanning segment. The Cytoplasmic portion of the chain corresponds to 290–297 (GLKWVRPR). Residues 298-318 (CVYLFSFAMIFNGFTDLMGSM) traverse the membrane as a helical segment. Residues 319-321 (SVD) lie on the Extracellular side of the membrane. A helical transmembrane segment spans residues 322–342 (YGGLVVFCIFFGISYGMVGAL). Topologically, residues 343–358 (QFEVLMAIVGTQKFSS) are cytoplasmic. A helical membrane pass occupies residues 359-379 (AIGLVLLAEAMAVLIGPPSAG). Over 380-388 (KLLDLTRRY) the chain is Extracellular. A helical membrane pass occupies residues 389–409 (MFVFIIAGIEVTTSALVLALG). At 410–473 (NFFCIKKKPA…EVVTNPETCV (64 aa)) the chain is on the cytoplasmic side. The segment at 421–447 (PHTKEAAAEREELNKSEDKTPEDAKVD) is disordered. 2 basolateral sorting signal regions span residues 427-449 (AAER…VDSI) and 449-473 (IEVE…ETCV).

It belongs to the major facilitator superfamily. Monocarboxylate porter (TC 2.A.1.13) family. Interacts with BSG; interaction mediates SLC16A3 targeting to the plasma membrane.

The protein resides in the cell membrane. The protein localises to the basolateral cell membrane. It carries out the reaction (S)-lactate(in) + H(+)(in) = (S)-lactate(out) + H(+)(out). The catalysed reaction is pyruvate(out) + H(+)(out) = pyruvate(in) + H(+)(in). Its function is as follows. Proton-dependent transporter of monocarboxylates such as L-lactate and pyruvate. Plays a predominant role in the L-lactate efflux from highly glycolytic cells. This is Monocarboxylate transporter 4 (SLC16A3) from Gallus gallus (Chicken).